The sequence spans 105 residues: Type VII secretion system extracellular protein D (105 aa).

As to quaternary structure, forms heterodimers with EsxB.

Its subcellular location is the secreted. This chain is Type VII secretion system extracellular protein D, found in Staphylococcus aureus (strain USA300).